The following is a 465-amino-acid chain: Asparagine--tRNA ligase (465 aa).

This sequence belongs to the class-II aminoacyl-tRNA synthetase family. Homodimer.

It is found in the cytoplasm. The catalysed reaction is tRNA(Asn) + L-asparagine + ATP = L-asparaginyl-tRNA(Asn) + AMP + diphosphate + H(+). This chain is Asparagine--tRNA ligase, found in Pseudoalteromonas translucida (strain TAC 125).